The primary structure comprises 675 residues: Acetyl-coenzyme A synthetase 2 (675 aa).

CoA-binding positions include 206-209 and Thr325; that span reads RGGK. Residues 401 to 403, 425 to 430, Asp516, and Arg531 each bind ATP; these read GEP and DTMWQT. CoA is bound at residue Ser539. Arg542 contributes to the ATP binding site. A CoA-binding site is contributed by Arg604.

The protein belongs to the ATP-dependent AMP-binding enzyme family.

The catalysed reaction is acetate + ATP + CoA = acetyl-CoA + AMP + diphosphate. This is Acetyl-coenzyme A synthetase 2 (ACS2) from Zygosaccharomyces bailii.